The following is a 297-amino-acid chain: GTPase Era (297 aa).

The Era-type G domain occupies 5 to 173; sequence RAGFVSFVGR…TTELMRLLPV (169 aa). The tract at residues 13–20 is G1; it reads GRPNVGKS. 13-20 serves as a coordination point for GTP; that stretch reads GRPNVGKS. Positions 39–43 are G2; that stretch reads QTTRR. Residues 60–63 form a G3 region; sequence DTPG. GTP contacts are provided by residues 60–64 and 123–126; these read DTPGV and TKID. The segment at 123–126 is G4; sequence TKID. The interval 152–154 is G5; that stretch reads VSA. Positions 205-283 constitute a KH type-2 domain; the sequence is VEDELPHSLA…FLSIRVKVAK (79 aa).

It belongs to the TRAFAC class TrmE-Era-EngA-EngB-Septin-like GTPase superfamily. Era GTPase family. Monomer.

It localises to the cytoplasm. Its subcellular location is the cell membrane. Functionally, an essential GTPase that binds both GDP and GTP, with rapid nucleotide exchange. Plays a role in 16S rRNA processing and 30S ribosomal subunit biogenesis and possibly also in cell cycle regulation and energy metabolism. This chain is GTPase Era, found in Leifsonia xyli subsp. xyli (strain CTCB07).